A 448-amino-acid polypeptide reads, in one-letter code: Probable xyloglucan 6-xylosyltransferase 1 (448 aa).

The Cytoplasmic portion of the chain corresponds to 1-19; that stretch reads MWVAERVVGERRMREIQRF. A helical; Signal-anchor for type II membrane protein transmembrane segment spans residues 20–42; it reads ARNAKLTVVCLLLTVVVLRGTVG. The Lumenal segment spans residues 43-448; it reads AGKFGTPQQD…AFKAMKTTST (406 aa). The interval 71–113 is disordered; sequence HHDALSRGGGSSSSSGRAAQRDDEPDPPPRTLRDPPYTLGPKI. N421 carries N-linked (GlcNAc...) asparagine glycosylation.

This sequence belongs to the glycosyltransferase 34 family.

It localises to the golgi apparatus membrane. The catalysed reaction is Transfers an alpha-D-xylosyl residue from UDP-D-xylose to a glucose residue in xyloglucan, forming an alpha-(1-&gt;6)-D-xylosyl-D-glucose linkage.. In terms of biological role, probable xyloglucan xylosyltransferase involved in the biosynthesis of xyloglucan in roots. This chain is Probable xyloglucan 6-xylosyltransferase 1, found in Oryza sativa subsp. indica (Rice).